The sequence spans 299 residues: 4-hydroxybenzoate octaprenyltransferase (299 aa).

The next 8 membrane-spanning stretches (helical) occupy residues 33-53, 56-76, 107-127, 151-171, 180-200, 213-233, 247-267, and 278-298; these read VGFLLLLWPTWWALWLAADGV, WWTLCVFTTGIWLTRSAGCVI, LLMFATLMLIAFGLVLTMNQL, LPQVYLGLAFGWGIPMAFAAI, WLLYIANILWTTAYDTWYAMV, IAILFAELDLVVQGVLYTLML, HTYWISLISAVALIGYQFIIA, and AFMHNNWVGMTIFAGIALATT.

This sequence belongs to the UbiA prenyltransferase family. Mg(2+) serves as cofactor.

The protein localises to the cell inner membrane. It carries out the reaction all-trans-octaprenyl diphosphate + 4-hydroxybenzoate = 4-hydroxy-3-(all-trans-octaprenyl)benzoate + diphosphate. It functions in the pathway cofactor biosynthesis; ubiquinone biosynthesis. In terms of biological role, catalyzes the prenylation of para-hydroxybenzoate (PHB) with an all-trans polyprenyl group. Mediates the second step in the final reaction sequence of ubiquinone-8 (UQ-8) biosynthesis, which is the condensation of the polyisoprenoid side chain with PHB, generating the first membrane-bound Q intermediate 3-octaprenyl-4-hydroxybenzoate. The protein is 4-hydroxybenzoate octaprenyltransferase of Xylella fastidiosa (strain M12).